We begin with the raw amino-acid sequence, 261 residues long: 5'-nucleotidase SurE (261 aa).

A divalent metal cation is bound by residues Asp8, Asp9, Ser43, and Asn96.

The protein belongs to the SurE nucleotidase family. A divalent metal cation is required as a cofactor.

The protein resides in the cytoplasm. The catalysed reaction is a ribonucleoside 5'-phosphate + H2O = a ribonucleoside + phosphate. In terms of biological role, nucleotidase that shows phosphatase activity on nucleoside 5'-monophosphates. This is 5'-nucleotidase SurE from Roseobacter denitrificans (strain ATCC 33942 / OCh 114) (Erythrobacter sp. (strain OCh 114)).